A 403-amino-acid polypeptide reads, in one-letter code: Protein STRICTOSIDINE SYNTHASE-LIKE 13 (403 aa).

Residues 1-42 (MEKKGQHGTYESMMTHHPILCIIALSVLFIAIDPFHMSPIGG) form the signal peptide. N-linked (GlcNAc...) asparagine glycans are attached at residues Asn66 and Asn206.

It belongs to the strictosidine synthase family.

Its subcellular location is the vacuole. Functionally, required for the exine formation during pollen development. The polypeptide is Protein STRICTOSIDINE SYNTHASE-LIKE 13 (Arabidopsis thaliana (Mouse-ear cress)).